Here is a 1135-residue protein sequence, read N- to C-terminus: WASH complex subunit 4 (1135 aa).

Position 2 is an N-acetylalanine (Ala2).

It belongs to the SWIP family. Probable component of the WASH complex.

The sequence is that of WASH complex subunit 4 from Dictyostelium discoideum (Social amoeba).